Reading from the N-terminus, the 332-residue chain is 4-hydroxythreonine-4-phosphate dehydrogenase (332 aa).

Substrate-binding residues include His-138 and Thr-139. A divalent metal cation-binding residues include His-168, His-213, and His-269. Lys-277, Asn-286, and Arg-295 together coordinate substrate.

Belongs to the PdxA family. In terms of assembly, homodimer. Requires Zn(2+) as cofactor. The cofactor is Mg(2+). Co(2+) is required as a cofactor.

Its subcellular location is the cytoplasm. It carries out the reaction 4-(phosphooxy)-L-threonine + NAD(+) = 3-amino-2-oxopropyl phosphate + CO2 + NADH. Its pathway is cofactor biosynthesis; pyridoxine 5'-phosphate biosynthesis; pyridoxine 5'-phosphate from D-erythrose 4-phosphate: step 4/5. Functionally, catalyzes the NAD(P)-dependent oxidation of 4-(phosphooxy)-L-threonine (HTP) into 2-amino-3-oxo-4-(phosphooxy)butyric acid which spontaneously decarboxylates to form 3-amino-2-oxopropyl phosphate (AHAP). This chain is 4-hydroxythreonine-4-phosphate dehydrogenase, found in Vibrio parahaemolyticus serotype O3:K6 (strain RIMD 2210633).